A 312-amino-acid chain; its full sequence is 1-phosphofructokinase (312 aa).

Residues Ser-223 to Gly-228 and Gly-254 to Asp-255 contribute to the ATP site. Asp-255 acts as the Proton acceptor in catalysis.

It belongs to the carbohydrate kinase PfkB family.

The enzyme catalyses beta-D-fructose 1-phosphate + ATP = beta-D-fructose 1,6-bisphosphate + ADP + H(+). Functionally, catalyzes the ATP-dependent phosphorylation of fructose-l-phosphate to fructose-l,6-bisphosphate. In Escherichia coli O157:H7, this protein is 1-phosphofructokinase (fruK).